Consider the following 184-residue polypeptide: uncharacterized protein (184 aa).

An N-terminal signal peptide occupies residues 1 to 20; it reads MTLRKILALTCLLLPMMASA.

It to H.influenzae HI_0045.

It localises to the periplasm. This is an uncharacterized protein from Escherichia coli (strain K12).